The chain runs to 229 residues: 2,3-bisphosphoglycerate-dependent phosphoglycerate mutase (229 aa).

Substrate is bound by residues 7–14 (RHGQSEWN), 20–21 (TG), Arg59, 86–89 (ERHY), Lys97, 113–114 (RR), and 182–183 (GN). Residue His8 is the Tele-phosphohistidine intermediate of the active site. Glu86 serves as the catalytic Proton donor/acceptor.

It belongs to the phosphoglycerate mutase family. BPG-dependent PGAM subfamily.

The catalysed reaction is (2R)-2-phosphoglycerate = (2R)-3-phosphoglycerate. It functions in the pathway carbohydrate degradation; glycolysis; pyruvate from D-glyceraldehyde 3-phosphate: step 3/5. Its function is as follows. Catalyzes the interconversion of 2-phosphoglycerate and 3-phosphoglycerate. The protein is 2,3-bisphosphoglycerate-dependent phosphoglycerate mutase of Listeria monocytogenes serotype 4b (strain F2365).